A 512-amino-acid chain; its full sequence is ATP synthase subunit alpha (512 aa).

Residue 169–176 participates in ATP binding; the sequence is GDRQTGKT.

It belongs to the ATPase alpha/beta chains family. As to quaternary structure, F-type ATPases have 2 components, CF(1) - the catalytic core - and CF(0) - the membrane proton channel. CF(1) has five subunits: alpha(3), beta(3), gamma(1), delta(1), epsilon(1). CF(0) has three main subunits: a(1), b(2) and c(9-12). The alpha and beta chains form an alternating ring which encloses part of the gamma chain. CF(1) is attached to CF(0) by a central stalk formed by the gamma and epsilon chains, while a peripheral stalk is formed by the delta and b chains.

Its subcellular location is the cell inner membrane. It catalyses the reaction ATP + H2O + 4 H(+)(in) = ADP + phosphate + 5 H(+)(out). Produces ATP from ADP in the presence of a proton gradient across the membrane. The alpha chain is a regulatory subunit. The polypeptide is ATP synthase subunit alpha (Rickettsia akari (strain Hartford)).